Consider the following 446-residue polypeptide: Choline monooxygenase, chloroplastic (446 aa).

A chloroplast-targeting transit peptide spans 1 to 65; the sequence is MAASATTMLL…NTSTNKIITK (65 aa). Positions 127–234 constitute a Rieske domain; the sequence is WQVAGYSEQV…VAEWGPFILI (108 aa). Residues C169, H171, C188, and H191 each coordinate [2Fe-2S] cluster. 2 residues coordinate Fe cation: H294 and H299.

The protein belongs to the choline monooxygenase family. Requires [2Fe-2S] cluster as cofactor. Fe cation is required as a cofactor. Mg(2+) serves as cofactor. In terms of tissue distribution, expressed in roots and leaves.

It is found in the plastid. The protein resides in the chloroplast stroma. The catalysed reaction is choline + 2 reduced [2Fe-2S]-[ferredoxin] + O2 + 2 H(+) = betaine aldehyde hydrate + 2 oxidized [2Fe-2S]-[ferredoxin] + H2O. It participates in amine and polyamine biosynthesis; betaine biosynthesis via choline pathway; betaine aldehyde from choline (monooxygenase route): step 1/1. Its function is as follows. Catalyzes the first step of the osmoprotectant glycine betaine synthesis. The polypeptide is Choline monooxygenase, chloroplastic (CMO) (Beta vulgaris (Sugar beet)).